The sequence spans 256 residues: Thiazole synthase (256 aa).

The Schiff-base intermediate with DXP role is filled by K95. Residues G156, 182–183 (AG), and 204–205 (NT) each bind 1-deoxy-D-xylulose 5-phosphate.

It belongs to the ThiG family. As to quaternary structure, homotetramer. Forms heterodimers with either ThiH or ThiS.

It localises to the cytoplasm. The catalysed reaction is [ThiS sulfur-carrier protein]-C-terminal-Gly-aminoethanethioate + 2-iminoacetate + 1-deoxy-D-xylulose 5-phosphate = [ThiS sulfur-carrier protein]-C-terminal Gly-Gly + 2-[(2R,5Z)-2-carboxy-4-methylthiazol-5(2H)-ylidene]ethyl phosphate + 2 H2O + H(+). Its pathway is cofactor biosynthesis; thiamine diphosphate biosynthesis. Catalyzes the rearrangement of 1-deoxy-D-xylulose 5-phosphate (DXP) to produce the thiazole phosphate moiety of thiamine. Sulfur is provided by the thiocarboxylate moiety of the carrier protein ThiS. In vitro, sulfur can be provided by H(2)S. The chain is Thiazole synthase from Salmonella typhi.